The chain runs to 205 residues: Holliday junction branch migration complex subunit RuvA (205 aa).

Residues 1-62 (MFEYVTGYVE…EDIMALYGFK (62 aa)) are domain I. The tract at residues 63–141 (TREERLLFTK…DVVPDAFVDL (79 aa)) is domain II. The segment at 142-152 (FSDTERFDEKK) is flexible linker. The segment at 153 to 205 (GSSAELDEALEALRALGYAEREVSRVVPELLKESLTTDQYIKKALSLLLNGKR) is domain III.

The protein belongs to the RuvA family. Homotetramer. Forms an RuvA(8)-RuvB(12)-Holliday junction (HJ) complex. HJ DNA is sandwiched between 2 RuvA tetramers; dsDNA enters through RuvA and exits via RuvB. An RuvB hexamer assembles on each DNA strand where it exits the tetramer. Each RuvB hexamer is contacted by two RuvA subunits (via domain III) on 2 adjacent RuvB subunits; this complex drives branch migration. In the full resolvosome a probable DNA-RuvA(4)-RuvB(12)-RuvC(2) complex forms which resolves the HJ.

The protein resides in the cytoplasm. The RuvA-RuvB-RuvC complex processes Holliday junction (HJ) DNA during genetic recombination and DNA repair, while the RuvA-RuvB complex plays an important role in the rescue of blocked DNA replication forks via replication fork reversal (RFR). RuvA specifically binds to HJ cruciform DNA, conferring on it an open structure. The RuvB hexamer acts as an ATP-dependent pump, pulling dsDNA into and through the RuvAB complex. HJ branch migration allows RuvC to scan DNA until it finds its consensus sequence, where it cleaves and resolves the cruciform DNA. In Bacillus cereus (strain ATCC 14579 / DSM 31 / CCUG 7414 / JCM 2152 / NBRC 15305 / NCIMB 9373 / NCTC 2599 / NRRL B-3711), this protein is Holliday junction branch migration complex subunit RuvA.